Here is a 787-residue protein sequence, read N- to C-terminus: PAN2-PAN3 deadenylation complex subunit pan3 (787 aa).

The segment at 1-20 (MNSGLTPSPSPAVAAAGPAG) is disordered. Positions 11–20 (PAVAAAGPAG) are enriched in low complexity. Residues 23–51 (GSKLKFCRYYAKDRTCFYGDECQFLHDDQ) form a C3H1-type zinc finger. 3 disordered regions span residues 131-162 (EATYPRMQQRMTNSSSSPSLLNDSAKPYAAHD), 179-210 (TMSQRRKTPNPTASEFIPKGGSTSRLSNMSQS), and 226-291 (GGPT…PPST). 2 stretches are compositionally biased toward low complexity: residues 143–154 (NSSSSPSLLNDS) and 200–210 (STSRLSNMSQS). A PABPC-interacting motif-2 (PAM-2) motif is present at residues 185-200 (KTPNPTASEFIPKGGS). Residues 265-290 (TPNPANYMVPTSASTPVTNSVSQPPS) are compositionally biased toward polar residues. The interval 365–650 (QIDQADMPGV…SVNDIMPMIG (286 aa)) is pseudokinase domain. Residues R422, 471-478 (DFHAGSET), and 545-546 (TK) contribute to the ATP site. The stretch at 651 to 689 (ARFYTQLDAAQMRNDVIEEDLAKEVQNGRLFRLLAKLGT) forms a coiled coil. The tract at residues 690-787 (INERPEFQKD…ELVAAANGQL (98 aa)) is knob domain.

It belongs to the protein kinase superfamily. PAN3 family. As to quaternary structure, homodimer. Forms a heterotrimer with a catalytic subunit pan2 to form the poly(A)-nuclease (PAN) deadenylation complex. Interacts (via PAM-2 motif) with poly(A)-binding protein pabpc1 (via PABC domain), conferring substrate specificity of the enzyme complex. Interacts with the GW182 family proteins tnrc6a, tnrc6b and tnrc6c.

It is found in the cytoplasm. The protein localises to the P-body. In terms of biological role, regulatory subunit of the poly(A)-nuclease (PAN) deadenylation complex, one of two cytoplasmic mRNA deadenylases involved in general and miRNA-mediated mRNA turnover. PAN specifically shortens poly(A) tails of RNA and the activity is stimulated by poly(A)-binding protein (PABP). PAN deadenylation is followed by rapid degradation of the shortened mRNA tails by the CCR4-NOT complex. Deadenylated mRNAs are then degraded by two alternative mechanisms, namely exosome-mediated 3'-5' exonucleolytic degradation, or deadenylation-dependent mRNA decaping and subsequent 5'-3' exonucleolytic degradation by XRN1. PAN3 acts as a positive regulator for PAN activity, recruiting the catalytic subunit PAN2 to mRNA via its interaction with RNA and PABP, and to miRNA targets via its interaction with GW182 family proteins. The sequence is that of PAN2-PAN3 deadenylation complex subunit pan3 from Xenopus tropicalis (Western clawed frog).